A 415-amino-acid chain; its full sequence is Serine hydroxymethyltransferase (415 aa).

(6S)-5,6,7,8-tetrahydrofolate contacts are provided by residues Leu-120 and 124–126 (GHL). Lys-229 carries the post-translational modification N6-(pyridoxal phosphate)lysine.

Belongs to the SHMT family. As to quaternary structure, homodimer. Pyridoxal 5'-phosphate serves as cofactor.

Its subcellular location is the cytoplasm. The catalysed reaction is (6R)-5,10-methylene-5,6,7,8-tetrahydrofolate + glycine + H2O = (6S)-5,6,7,8-tetrahydrofolate + L-serine. The protein operates within one-carbon metabolism; tetrahydrofolate interconversion. Its pathway is amino-acid biosynthesis; glycine biosynthesis; glycine from L-serine: step 1/1. Functionally, catalyzes the reversible interconversion of serine and glycine with tetrahydrofolate (THF) serving as the one-carbon carrier. This reaction serves as the major source of one-carbon groups required for the biosynthesis of purines, thymidylate, methionine, and other important biomolecules. Also exhibits THF-independent aldolase activity toward beta-hydroxyamino acids, producing glycine and aldehydes, via a retro-aldol mechanism. This is Serine hydroxymethyltransferase from Pelotomaculum thermopropionicum (strain DSM 13744 / JCM 10971 / SI).